The following is a 148-amino-acid chain: Large ribosomal subunit protein bL28c (148 aa).

The transit peptide at methionine 1–alanine 71 directs the protein to the chloroplast.

As to quaternary structure, component of the chloroplast large ribosomal subunit (LSU). Mature 70S chloroplast ribosomes of higher plants consist of a small (30S) and a large (50S) subunit. The 30S small subunit contains 1 molecule of ribosomal RNA (16S rRNA) and 24 different proteins. The 50S large subunit contains 3 rRNA molecules (23S, 5S and 4.5S rRNA) and 33 different proteins.

It is found in the plastid. It localises to the chloroplast. Its function is as follows. Component of the chloroplast ribosome (chloro-ribosome), a dedicated translation machinery responsible for the synthesis of chloroplast genome-encoded proteins, including proteins of the transcription and translation machinery and components of the photosynthetic apparatus. The sequence is that of Large ribosomal subunit protein bL28c (RPL28) from Spinacia oleracea (Spinach).